Consider the following 265-residue polypeptide: Capsule polysaccharide export inner-membrane protein BexB (265 aa).

The next 6 helical transmembrane spans lie at 37–57, 64–84, 121–141, 148–168, 178–198, and 235–255; these read IGFL…VMMW, KFST…AMMW, VAGA…IGWI, FYML…GLII, FGKI…AFFF, and ESIG…LVMV. The ABC transmembrane type-2 domain occupies 37–258; the sequence is IGFLWLFVEP…LMGLVMVKNF (222 aa).

It belongs to the ABC-2 integral membrane protein family.

Its subcellular location is the cell inner membrane. May form an ATP-driven capsule polysaccharide export apparatus, in association with the BexA, BexC and BexD proteins. This chain is Capsule polysaccharide export inner-membrane protein BexB (bexB), found in Haemophilus influenzae.